A 261-amino-acid polypeptide reads, in one-letter code: Glucose 1-dehydrogenase 2 (261 aa).

11–35 (VVTGGSKGLGRAMAVRFGQEQSKVV) provides a ligand contact to NADP(+). Ser145 contacts substrate. The Proton acceptor role is filled by Tyr158.

It belongs to the short-chain dehydrogenases/reductases (SDR) family. In terms of assembly, homotetramer.

It catalyses the reaction D-glucose + NAD(+) = D-glucono-1,5-lactone + NADH + H(+). The enzyme catalyses D-glucose + NADP(+) = D-glucono-1,5-lactone + NADPH + H(+). This is Glucose 1-dehydrogenase 2 (gdhII) from Priestia megaterium (Bacillus megaterium).